A 510-amino-acid polypeptide reads, in one-letter code: GPI mannosyltransferase 3 (510 aa).

A run of 7 helical transmembrane segments spans residues 17 to 37, 96 to 116, 123 to 143, 145 to 163, 179 to 199, 221 to 241, and 269 to 289; these read TVLV…KTFF, IAPK…TWKL, PAEA…WFFL, RTFS…LNYW, LFIG…WAVL, VALV…EPVF, and YEAL…GLWI. Residue Asn290 is glycosylated (N-linked (GlcNAc...) asparagine). 2 helical membrane passes run 316–336 and 342–362; these read FIYP…TQTP and WLVW…SQVH.

The protein belongs to the glycosyltransferase 22 family. PIGB subfamily.

The protein localises to the endoplasmic reticulum membrane. Its pathway is glycolipid biosynthesis; glycosylphosphatidylinositol-anchor biosynthesis. Its function is as follows. Mannosyltransferase involved in glycosylphosphatidylinositol-anchor biosynthesis. Transfers the third mannose to Man2-GlcN-acyl-PI during GPI precursor assembly. The polypeptide is GPI mannosyltransferase 3 (GPI10) (Yarrowia lipolytica (strain CLIB 122 / E 150) (Yeast)).